A 608-amino-acid polypeptide reads, in one-letter code: Bifunctional dihydrofolate reductase-thymidylate synthase (608 aa).

Positions D10–K228 constitute a DHFR domain. Position 14 to 15 (I14 to C15) interacts with substrate. Residue A16 coordinates NADP(+). A substrate-binding site is contributed by V31. G39–V45 is an NADP(+) binding site. The substrate site is built by D54 and N108. Residues R106–N108, S128–T130, and N144 each bind NADP(+). Positions 164, 170, and 185 each coordinate substrate. G165 to E172 contributes to the NADP(+) binding site. The thymidylate synthase stretch occupies residues Y322–A608. R345 is a binding site for dUMP. Residue C490 is part of the active site. DUMP is bound by residues H491, Q509–D513, N521, and H551–Y553.

The protein in the N-terminal section; belongs to the dihydrofolate reductase family. In the C-terminal section; belongs to the thymidylate synthase family. Homodimer.

The catalysed reaction is (6S)-5,6,7,8-tetrahydrofolate + NADP(+) = 7,8-dihydrofolate + NADPH + H(+). It carries out the reaction dUMP + (6R)-5,10-methylene-5,6,7,8-tetrahydrofolate = 7,8-dihydrofolate + dTMP. Its pathway is cofactor biosynthesis; tetrahydrofolate biosynthesis; 5,6,7,8-tetrahydrofolate from 7,8-dihydrofolate: step 1/1. In terms of biological role, bifunctional enzyme. Involved in de novo dTMP biosynthesis. Key enzyme in folate metabolism. Catalyzes an essential reaction for de novo glycine and purine synthesis, DNA precursor synthesis, and for the conversion of dUMP to dTMP. The sequence is that of Bifunctional dihydrofolate reductase-thymidylate synthase from Plasmodium falciparum (isolate K1 / Thailand).